Consider the following 251-residue polypeptide: tRNA pseudouridine synthase A 1 (251 aa).

Asp52 acts as the Nucleophile in catalysis. Tyr110 provides a ligand contact to substrate.

This sequence belongs to the tRNA pseudouridine synthase TruA family. As to quaternary structure, homodimer.

It carries out the reaction uridine(38/39/40) in tRNA = pseudouridine(38/39/40) in tRNA. Its function is as follows. Formation of pseudouridine at positions 38, 39 and 40 in the anticodon stem and loop of transfer RNAs. In Desulfotalea psychrophila (strain LSv54 / DSM 12343), this protein is tRNA pseudouridine synthase A 1.